The primary structure comprises 73 residues: Beta-defensin 10 (73 aa).

A signal peptide spans 1-23 (MRTLCSLLLICCLLFSYTTPAVG). Intrachain disulfides connect cysteine 37–cysteine 66, cysteine 44–cysteine 59, and cysteine 49–cysteine 67.

The protein belongs to the beta-defensin family. As to expression, expressed in both adult and neonate brain, and very weakly in kidneys, epididymis, and testis.

The protein localises to the secreted. Has antibacterial activity. The sequence is that of Beta-defensin 10 (Defb10) from Mus musculus (Mouse).